The chain runs to 1023 residues: Peroxisome proliferator-activated receptor gamma coactivator 1-beta (1023 aa).

Residues 1–91 (MAGNDCGALL…LFQIDSENEA (91 aa)) form an abolishes DNA transcriptional activity when missing region. Residues 122–148 (LSCTSASPAPSSAPPSPAPEKPSAPAP) form a disordered region. The segment covering 132–146 (SSAPPSPAPEKPSAP) has biased composition (pro residues). Positions 156 to 160 (LQKLL) match the LXXLL motif 1 motif. Disordered stretches follow at residues 165–210 (YPTS…QSQS), 237–278 (LQSP…PGAP), and 302–331 (RKLP…WSRH). An LXXLL motif 2 motif is present at residues 343–347 (LRELL). Disordered stretches follow at residues 369-463 (LTPR…LPWT), 520-567 (RELG…QLPP), 601-623 (TAGL…FKPD), and 636-683 (LPSP…GQKR). Ser-384 is modified (phosphoserine). Over residues 412-422 (LRLEVKREVRR) the composition is skewed to basic and acidic residues. A compositionally biased stretch (acidic residues) spans 429-450 (QEEEDEEEEEEEEEEEKEEEEE). Ser-524 is subject to Phosphoserine. The segment covering 614–623 (PTEEDPFKPD) has biased composition (basic and acidic residues). Phosphoserine is present on Ser-638. The HCFC1-binding-motif (HBM) motif lies at 691 to 694 (DHDY). Disordered regions lie at residues 717–758 (VHLE…LRDH) and 779–867 (DLAS…WSPA). The segment covering 793–805 (EDSSSSSGESSFL) has biased composition (low complexity). Over residues 806 to 825 (PEEEEEEGEEEEEDDEEEDS) the composition is skewed to acidic residues. Low complexity predominate over residues 849–866 (CSRSRSSSGSSPCHSWSP). One can recognise an RRM domain in the interval 902–976 (RVVYIQNLSS…RNEPSFQLSY (75 aa)).

Interacts with hepatocyte nuclear factor 4-alpha/HNF4A, Sterol regulatory binding transcription factor 1/SREBF1, PPAR-alpha/PPARA, thyroid hormone receptor beta/THRB and host cell factor/HCFC1. Interacts with estrogen-related receptor gamma/ESRRG and alpha/ESRRA. Interacts with PRDM16. Interacts with estrogen receptor alpha/ESR1. Ubiquitous with higher expression in heart, brain and skeletal muscle.

The protein localises to the nucleus. Functionally, plays a role of stimulator of transcription factors and nuclear receptors activities. Activates transcriptional activity of estrogen receptor alpha, nuclear respiratory factor 1 (NRF1) and glucocorticoid receptor in the presence of glucocorticoids. May play a role in constitutive non-adrenergic-mediated mitochondrial biogenesis as suggested by increased basal oxygen consumption and mitochondrial number when overexpressed. May be involved in fat oxidation and non-oxidative glucose metabolism and in the regulation of energy expenditure. Induces the expression of PERM1 in the skeletal muscle in an ESRRA-dependent manner. The polypeptide is Peroxisome proliferator-activated receptor gamma coactivator 1-beta (PPARGC1B) (Homo sapiens (Human)).